We begin with the raw amino-acid sequence, 767 residues long: Glucoamylase S1 (767 aa).

An N-terminal signal peptide occupies residues 1–21; that stretch reads MQRPFLLAYLVLSLLFNSALG. 2 disordered regions span residues 29 to 83 and 125 to 149; these read RGSS…ETTI and TTTV…PTTP. A compositionally biased stretch (low complexity) spans 30 to 48; that stretch reads GSSSSNITSSGPSSTPFSS. Asparagine 35 carries N-linked (GlcNAc...) asparagine glycosylation. Polar residues predominate over residues 49 to 66; sequence ATESFSTGTTVTPSSSKY. 2 stretches are compositionally biased toward low complexity: residues 71-83 and 131-149; these read TETS…ETTI and STSP…PTTP. N-linked (GlcNAc...) asparagine glycans are attached at residues asparagine 308, asparagine 322, asparagine 414, asparagine 423, and asparagine 434. Residues 348-691 are h subunit; it reads VSIERIFENI…ASTTLYQLIY (344 aa). A substrate-binding site is contributed by tryptophan 455. The N-linked (GlcNAc...) asparagine glycan is linked to asparagine 513. The active-site Proton acceptor is the aspartate 518. The Proton donor role is filled by glutamate 521. N-linked (GlcNAc...) asparagine glycans are attached at residues asparagine 546, asparagine 645, asparagine 650, asparagine 720, and asparagine 741. Positions 692–767 are y subunit; the sequence is RHISEQHDLV…LKATWEQTGN (76 aa).

This sequence belongs to the glycosyl hydrolase 15 family.

The catalysed reaction is Hydrolysis of terminal (1-&gt;4)-linked alpha-D-glucose residues successively from non-reducing ends of the chains with release of beta-D-glucose.. This chain is Glucoamylase S1 (STA1), found in Saccharomyces cerevisiae (Baker's yeast).